The primary structure comprises 465 residues: UDP-N-acetylmuramoylalanine--D-glutamate ligase (465 aa).

ATP is bound at residue 116 to 122 (GTNGKTT).

The protein belongs to the MurCDEF family.

The protein resides in the cytoplasm. The catalysed reaction is UDP-N-acetyl-alpha-D-muramoyl-L-alanine + D-glutamate + ATP = UDP-N-acetyl-alpha-D-muramoyl-L-alanyl-D-glutamate + ADP + phosphate + H(+). It participates in cell wall biogenesis; peptidoglycan biosynthesis. Cell wall formation. Catalyzes the addition of glutamate to the nucleotide precursor UDP-N-acetylmuramoyl-L-alanine (UMA). This is UDP-N-acetylmuramoylalanine--D-glutamate ligase from Thermobifida fusca (strain YX).